A 455-amino-acid polypeptide reads, in one-letter code: Probable glycine dehydrogenase (decarboxylating) subunit 1 (455 aa).

The protein belongs to the GcvP family. N-terminal subunit subfamily. As to quaternary structure, the glycine cleavage system is composed of four proteins: P, T, L and H. In this organism, the P 'protein' is a heterodimer of two subunits.

The enzyme catalyses N(6)-[(R)-lipoyl]-L-lysyl-[glycine-cleavage complex H protein] + glycine + H(+) = N(6)-[(R)-S(8)-aminomethyldihydrolipoyl]-L-lysyl-[glycine-cleavage complex H protein] + CO2. Its function is as follows. The glycine cleavage system catalyzes the degradation of glycine. The P protein binds the alpha-amino group of glycine through its pyridoxal phosphate cofactor; CO(2) is released and the remaining methylamine moiety is then transferred to the lipoamide cofactor of the H protein. The sequence is that of Probable glycine dehydrogenase (decarboxylating) subunit 1 from Francisella tularensis subsp. holarctica (strain LVS).